The primary structure comprises 1608 residues: MDPESVGYCNNPDFLHKGSMDELYNISKLTDDIKPVEEKWKLVPAFMKCRGLVKQHIDSFNFFINVEMKKIVKANERLTAENDPSYFVRFTDINVGSPTSTEDNLDSVQLTPQRCRLRDMTYSAPIFVNIEYTRNKQIISKRDVHIGNIPIMLRSSNCVLSKKTPEQMAALGECPMDPGGYFIVRGQEKVILNHEQLSKNRIIIEMDSKGLPSASVTSSTHERKSRTGVTLKNEKLYLKHNTFGEDIPVAIVLKGMGVETDQEMAQLVGSDDVFLNAITPSLEECQKCGVHTAAQALDYLGSRIKVFRRPYGVQNKKTKSEEARDILAGVVLNHVPVRRYNFRLKVIYLSLMIRRIIMASKDKSCLDDKDYYGNKRIELSGQLISLLFEDCFKKFQSELKKSVDQAIAKANRAENLDLPKLIRTDTITNGFTHAISSGQWNLKRFRMERSGVSQVLSRLSYISCMGMMTRIQSQFEKTRKVAGPRSLQPSQWGMLCPSDTPEGEACLHPDTIITMSNGQQKPIRQLKDGDSIITLDPITMEAHSTRIYSHFIKSSSQYGKQLLKITTITGKEIICTNDHRFLTSNGNWKQSKDLLLNDKLFLISSSNQLEFNNNNNENNNENNNDIIEILNENQLINQGVVPIKIIQELKSIELLPLLNNNEKLITISRIIGSIDKIGSNKQNEPIIQYQFNLISDFDQFLKDLQYLGFINPIYKLNEEQQQQQQQKIDHQQQQQQQVEQQQKSIIIDFIGSSFGYFIQSLLNEKNWIEKSNNQFVKKEFLSSFISNVNRIQFNIIEEINQQNNDSNFKILLNYKQQKQQQNEKEERAVVDHDNEIFNIKSLQILLNQFNVISSIDFEESNLIIINSSLKKFIDLINIKFNQKLNNQIIQIREYLNYINYNNNNNNNEEINIKKKDFGYFKKLKIKRNSFEIEIEKIEQLNYQDCPEISDFTTESDYHSMISNGFVSHNCGLVKNFALMSHVTTDDSEGPLLRLAYNLGVQDILLVTGEELNSRNAYLVLLNGQIIGIHNSPDYFVTTLRKMRRAGRIREFVSICKNKAQQTISVACDGGRLCRPVIIVDDQRPRLTQEHIEDLKDGLRTFDDFIREGIIEYLDVNEENDSFLAWREAAIQPWTTHLEIEPFTMLGCVAGLIPYPHHNQSPRNTYQCAMGKQAIGAIAYNQLTRIDTLLYLLVHTQRPLCQTRTIDLLNWYKLPAGHNATVAVMSYSGYDIEDALVMNKASLDRGFGRCIVLKKQVTSIKKHGNDTSDRIFPPTPNDLRQPKYGLLDSDGIAKPGELAQKGQILVNKYSPLNTIDATPNPELIPDSAYKSSYMGYKYDNPAFIDKVLLTSGDDEQLLIKMLMRSTRRPELGDKFSSRHGQKGVCGIIVKQEDMPFSDLGICPDIIMNPHGFPSRMTIGKMIELLAGKAGVLSGKFGFGTCFGGDRVENISKVLISKGFSYGGKDYVTSGVTGEPLACFIFFGPIFYQKLKHMVMDKMHARARGPTVTLTRQPTEGRARGGGLRLGEMERDCLIGYGASALIMERLMISSDRFTVYACKNCGFLGYEGYCQYCKSSVDISTIQIPYACKLLFQELQAMNIVPRLKLVDS.

Zn(2+) contacts are provided by Cys-1557, Cys-1560, Cys-1569, and Cys-1572. Residues 1557–1572 (CKNCGFLGYEGYCQYC) form a C4-type zinc finger.

The protein belongs to the RNA polymerase beta chain family. Component of the RNA polymerase III (Pol III) complex. Post-translationally, this protein undergoes a protein self splicing that involves a post-translational excision of the intervening region (intein) followed by peptide ligation.

It localises to the nucleus. It catalyses the reaction RNA(n) + a ribonucleoside 5'-triphosphate = RNA(n+1) + diphosphate. In terms of biological role, DNA-dependent RNA polymerase catalyzes the transcription of DNA into RNA using the four ribonucleoside triphosphates as substrates. Second largest core component of RNA polymerase III which synthesizes small RNAs, such as 5S rRNA and tRNAs. Proposed to contribute to the polymerase catalytic activity and forms the polymerase active center together with the largest subunit. Pol III is composed of mobile elements and rpc2 is part of the core element with the central large cleft and probably a clamp element that moves to open and close the cleft. The polypeptide is DNA-directed RNA polymerase III subunit rpc2 (polr3b) (Dictyostelium discoideum (Social amoeba)).